Consider the following 498-residue polypeptide: DNA-directed RNA polymerase subunit Rpo2N (498 aa).

This sequence belongs to the RNA polymerase beta chain family. Part of the RNA polymerase complex.

It is found in the cytoplasm. It catalyses the reaction RNA(n) + a ribonucleoside 5'-triphosphate = RNA(n+1) + diphosphate. DNA-dependent RNA polymerase (RNAP) catalyzes the transcription of DNA into RNA using the four ribonucleoside triphosphates as substrates. The Rpo2 subunit (Rpo2N and Rpo2C in this organism) is implicated in DNA promoter recognition and in nucleotide binding. The polypeptide is DNA-directed RNA polymerase subunit Rpo2N (Methanocaldococcus jannaschii (strain ATCC 43067 / DSM 2661 / JAL-1 / JCM 10045 / NBRC 100440) (Methanococcus jannaschii)).